Reading from the N-terminus, the 261-residue chain is Chloroplastic import inner membrane translocase subunit HP30-1 (261 aa).

4 helical membrane passes run 59 to 77 (AAVV…GGLM), 113 to 129 (NFAA…SVMK), 139 to 155 (SAVV…SLVS), and 163 to 180 (MNAI…GVFF).

The protein belongs to the Tim17/Tim22/Tim23 family. Probable component of a protein-conducting channel made of HP30-1, HP30-2 and HP20 that mediates the import of transit sequence-less proteins into the chloroplastic inner membrane. Interacts with CEQORH.

It is found in the plastid. Its subcellular location is the chloroplast inner membrane. Functionally, together with HP30-2 and HP20, triggers the import and insertion of transit sequence-less multi-pass transmembrane proteins (e.g. CEQORH) into the chloroplastic inner membrane. This Arabidopsis thaliana (Mouse-ear cress) protein is Chloroplastic import inner membrane translocase subunit HP30-1.